A 457-amino-acid chain; its full sequence is Argininosuccinate lyase (457 aa).

It belongs to the lyase 1 family. Argininosuccinate lyase subfamily.

It localises to the cytoplasm. It catalyses the reaction 2-(N(omega)-L-arginino)succinate = fumarate + L-arginine. Its pathway is amino-acid biosynthesis; L-arginine biosynthesis; L-arginine from L-ornithine and carbamoyl phosphate: step 3/3. The protein is Argininosuccinate lyase of Salmonella arizonae (strain ATCC BAA-731 / CDC346-86 / RSK2980).